Reading from the N-terminus, the 255-residue chain is Ribonuclease HII (255 aa).

Residues 72–255 (AIICGIDEVG…KSFEPIKSLL (184 aa)) enclose the RNase H type-2 domain. A divalent metal cation contacts are provided by D78, E79, and D170.

The protein belongs to the RNase HII family. It depends on Mn(2+) as a cofactor. Mg(2+) is required as a cofactor.

The protein resides in the cytoplasm. It catalyses the reaction Endonucleolytic cleavage to 5'-phosphomonoester.. In terms of biological role, endonuclease that specifically degrades the RNA of RNA-DNA hybrids. The sequence is that of Ribonuclease HII from Staphylococcus aureus (strain bovine RF122 / ET3-1).